The chain runs to 232 residues: MSGFTFKQFHINQDSCAMKVGTDGILLGAWADVKHCKNILDMGSGTGLLTLMLAQRTEENCQIQAVELDPIAAKQAQENINNSVWKNRIQLTQADIQHFLQTTEQTFDLIVANPPYFEQGIACKNEERELARYTKQSHLNWLEWAATRLSENGKISFVLPYDAGKTLTKSTALFCIKQTNVITKIGKTPQRMLLTFAKQPEVLMQDQLVIYDADNQYTEAFIELTKDFYLKF.

This sequence belongs to the methyltransferase superfamily. tRNA (adenine-N(6)-)-methyltransferase family.

It is found in the cytoplasm. The catalysed reaction is adenosine(37) in tRNA1(Val) + S-adenosyl-L-methionine = N(6)-methyladenosine(37) in tRNA1(Val) + S-adenosyl-L-homocysteine + H(+). Its function is as follows. Specifically methylates the adenine in position 37 of tRNA(1)(Val) (anticodon cmo5UAC). This Haemophilus influenzae (strain 86-028NP) protein is tRNA1(Val) (adenine(37)-N6)-methyltransferase.